The following is a 184-amino-acid chain: Large ribosomal subunit protein uL6 (184 aa).

Belongs to the universal ribosomal protein uL6 family. In terms of assembly, part of the 50S ribosomal subunit.

In terms of biological role, this protein binds to the 23S rRNA, and is important in its secondary structure. It is located near the subunit interface in the base of the L7/L12 stalk, and near the tRNA binding site of the peptidyltransferase center. The protein is Large ribosomal subunit protein uL6 of Aster yellows witches'-broom phytoplasma (strain AYWB).